A 449-amino-acid polypeptide reads, in one-letter code: Chromosomal replication initiator protein DnaA (449 aa).

The domain I, interacts with DnaA modulators stretch occupies residues 1 to 72; the sequence is MPNLEELWAY…VEGVYEFAQL (72 aa). The segment at 72 to 109 is domain II; sequence LEVDPVIMTKDELQPAPATDQRPAVEEDDQNLTFKAKT. The domain III, AAA+ region stretch occupies residues 110–326; that stretch reads HLNPKYTFDR…GALVRVQAFS (217 aa). ATP-binding residues include G154, G156, K157, and T158. The domain IV, binds dsDNA stretch occupies residues 327 to 449; sequence TMKNEDITTS…ELRNILKNRG (123 aa).

The protein belongs to the DnaA family. In terms of assembly, oligomerizes as a right-handed, spiral filament on DNA at oriC.

It is found in the cytoplasm. Functionally, plays an essential role in the initiation and regulation of chromosomal replication. ATP-DnaA binds to the origin of replication (oriC) to initiate formation of the DNA replication initiation complex once per cell cycle. Binds the DnaA box (a 9 base pair repeat at the origin) and separates the double-stranded (ds)DNA. Forms a right-handed helical filament on oriC DNA; dsDNA binds to the exterior of the filament while single-stranded (ss)DNA is stabiized in the filament's interior. The ATP-DnaA-oriC complex binds and stabilizes one strand of the AT-rich DNA unwinding element (DUE), permitting loading of DNA polymerase. After initiation quickly degrades to an ADP-DnaA complex that is not apt for DNA replication. Binds acidic phospholipids. The sequence is that of Chromosomal replication initiator protein DnaA from Lacticaseibacillus casei (strain BL23) (Lactobacillus casei).